A 146-amino-acid chain; its full sequence is Anti-sigma F factor (146 aa).

Belongs to the anti-sigma-factor family.

It carries out the reaction L-seryl-[protein] + ATP = O-phospho-L-seryl-[protein] + ADP + H(+). The enzyme catalyses L-threonyl-[protein] + ATP = O-phospho-L-threonyl-[protein] + ADP + H(+). Functionally, binds to sigma F and blocks its ability to form an RNA polymerase holoenzyme (E-sigma F). Phosphorylates SpoIIAA on a serine residue. This phosphorylation may enable SpoIIAA to act as an anti-anti-sigma factor that counteracts SpoIIAB and thus releases sigma F from inhibition. The sequence is that of Anti-sigma F factor (spoIIAB) from Bacillus subtilis (strain 168).